A 600-amino-acid polypeptide reads, in one-letter code: Autophagy-related protein 22-2 (600 aa).

The segment at 1-30 (MAFASPPASPPDEDGQARAPRYPGEDTTPT) is disordered. Transmembrane regions (helical) follow at residues 41-61 (YGIA…PLTL), 117-137 (SFAM…LISF), 149-168 (TLLV…FVFI), and 186-206 (CLGS…ASDP). The tract at residues 234–257 (SFDGDEPTHRPPTGLGLGGATGTS) is disordered. Transmembrane regions (helical) follow at residues 271–291 (GVGL…LLLF), 304–324 (TLPL…FTMV), 378–398 (VIVF…VSGT), and 414–434 (VALL…LWPI). The N-linked (GlcNAc...) asparagine glycan is linked to Asn-444. 4 helical membrane-spanning segments follow: residues 449–469 (VCIA…IPLF), 484–506 (YPLA…SFFG), 526–546 (KGSS…TGQV), and 549–569 (GFFF…MVDA).

Belongs to the ATG22 family.

The protein resides in the vacuole membrane. Its function is as follows. Vacuolar effluxer which mediate the efflux of amino acids resulting from autophagic degradation. The release of autophagic amino acids allows the maintenance of protein synthesis and viability during nitrogen starvation. The polypeptide is Autophagy-related protein 22-2 (atg22-2) (Aspergillus niger (strain ATCC MYA-4892 / CBS 513.88 / FGSC A1513)).